The following is a 445-amino-acid chain: Phosphoglucosamine mutase 1 (445 aa).

The Phosphoserine intermediate role is filled by Ser102. The Mg(2+) site is built by Ser102, Asp241, Asp243, and Asp245. Ser102 bears the Phosphoserine mark.

The protein belongs to the phosphohexose mutase family. Mg(2+) is required as a cofactor. Activated by phosphorylation.

The enzyme catalyses alpha-D-glucosamine 1-phosphate = D-glucosamine 6-phosphate. In terms of biological role, catalyzes the conversion of glucosamine-6-phosphate to glucosamine-1-phosphate. The sequence is that of Phosphoglucosamine mutase 1 from Shewanella amazonensis (strain ATCC BAA-1098 / SB2B).